The sequence spans 655 residues: MLFDLINSFLKNGINNSNNNNNNNNNKNNFYNSLEDDDYLLNNQTTKVSLYLYFFIFAFMFLVVDLIMLYYKHRENIESRETDLSLKLNKMLIDFENDNKIKSSPTTSTTTTTITPTTTSSSQLRQPSTPKTTTKTINSPPSTPKSPPPLPSLESKLLYKDDIKQQLSLNEAKSQIDSAKQLDESLKYNSCIKLYIDGIEKLMALFSSYNSKEYRDYIDFYLKRAEYLKNELKKGTNLKSITNFNNFSKEYQINYNNKILEQQQQQQQQSSSTYRNSLNLSSSKSNSTINNRHSISSLSSLNSTTATTTTPSNTSTITSPGNKYGLQKSLSSTTLSLKKSSNSTNFQQPSPPSMVIPDIKGIDKSMVTLIMNEIMDRKNPVKWDDVVGLDKVKQSLMESVILPNLRPDVFTGLRAPPKGLLLFGPPGNGKTMIAKAVAYESKVTFFSISSSSLTSKYVGDGEKLVRALFAVATHFQPSIIFIDEIDSLLTERSSNESEASRRLKTEILVQFDGARTNGDERVLVMGATNRPEDLDDAALRRLVKRIYVGLPELETRLQIIQHLLVGQRHSLTKQQINSLAEVTQGYSGFDLAALCKDAAYEPIRRLGIGIKDLELNEISLISFKDFANSLKQIRPSVTSQSLKSFEKWNQKFGTI.

At 1–58 (MLFDLINSFLKNGINNSNNNNNNNNNKNNFYNSLEDDDYLLNNQTTKVSLYLYFFIFA) the chain is on the cytoplasmic side. Positions 59–79 (FMFLVVDLIMLYYKHRENIES) form an intramembrane region, helical. Residues 80–655 (RETDLSLKLN…EKWNQKFGTI (576 aa)) are Cytoplasmic-facing. Over residues 102 to 140 (KSSPTTSTTTTTITPTTTSSSQLRQPSTPKTTTKTINSP) the composition is skewed to low complexity. The disordered stretch occupies residues 102–151 (KSSPTTSTTTTTITPTTTSSSQLRQPSTPKTTTKTINSPPSTPKSPPPLP). Positions 141-151 (PSTPKSPPPLP) are enriched in pro residues. Residues 169 to 232 (LNEAKSQIDS…KRAEYLKNEL (64 aa)) enclose the MIT domain. Residues 261–325 (EQQQQQQQQS…TITSPGNKYG (65 aa)) are disordered. Residues 262-320 (QQQQQQQQSSSTYRNSLNLSSSKSNSTINNRHSISSLSSLNSTTATTTTPSNTSTITSP) show a composition bias toward low complexity. Residue 424–431 (GPPGNGKT) coordinates ATP.

This sequence belongs to the AAA ATPase family. Spastin subfamily. As to quaternary structure, homohexamer. The homohexamer is stabilized by ATP-binding. The homohexamer may adopt a ring conformation through which microtubules pass prior to being severed. Interacts with microtubules.

Its subcellular location is the membrane. The protein localises to the cytoplasm. It localises to the cytoskeleton. It is found in the microtubule organizing center. The protein resides in the centrosome. It carries out the reaction n ATP + n H2O + a microtubule = n ADP + n phosphate + (n+1) alpha/beta tubulin heterodimers.. ATP-dependent microtubule severing protein. Microtubule severing may promote reorganization of cellular microtubule arrays and the release of microtubules from the microtubule organizing center following nucleation. In Dictyostelium discoideum (Social amoeba), this protein is Spastin.